The chain runs to 156 residues: Endogenous retrovirus group K member 10 Pro protein (156 aa).

One can recognise a Peptidase A2 domain in the interval 21-96; the sequence is FEGLVDTGAD…IPLNLWGRDL (76 aa). The active site involves Asp-26. A G-patch domain is found at 111 to 156; the sequence is YSPTSQKIMTKMGYIPGKGLGKNEDGIKVPVEAKINQEREGIGYPF.

It belongs to the peptidase A2 family. HERV class-II K(HML-2) subfamily. As to quaternary structure, active as a homodimer. Post-translationally, autoproteolytically processed at the N-terminus. Expected C-terminal autoprocessing not detected. The sequence shown is that of the processed Pro protein.

The catalysed reaction is Processing at the authentic HIV-1 PR recognition site and release of the mature p17 matrix and the p24 capsid protein, as a result of the cleavage of the -SQNY-|-PIVQ- cleavage site.. Resistant to a number of clinically useful HIV-1 PR inhibitors. Inhibited by cyclic urea SD146. In terms of biological role, retroviral proteases have roles in processing of the primary translation products and the maturation of the viral particle. Endogenous Pro proteins may have kept, lost or modified their original function during evolution. This endogenous protein has retained most of the characteristics of retroviral proteases. This is Endogenous retrovirus group K member 10 Pro protein (ERVK-10) from Homo sapiens (Human).